We begin with the raw amino-acid sequence, 257 residues long: 24 kDa outer membrane protein (257 aa).

The N-terminal stretch at 1 to 21 (MKNKSKLLACCLMALPISSFS) is a signal peptide.

The protein belongs to the MipA/OmpV family.

It is found in the cell outer membrane. In Pasteurella multocida (strain Pm70), this protein is 24 kDa outer membrane protein.